The primary structure comprises 59 residues: Large ribosomal subunit protein bL32 (59 aa).

A disordered region spans residues 1–59; it reads MAVQQNKKSPSKRGMHRSHDALTAPALSVDSTTGEVHRPHHISPNGMYRGRKVVKAKGE. Basic residues predominate over residues 49-59; sequence RGRKVVKAKGE.

It belongs to the bacterial ribosomal protein bL32 family.

In Neisseria meningitidis serogroup B (strain ATCC BAA-335 / MC58), this protein is Large ribosomal subunit protein bL32 (rpmF).